Reading from the N-terminus, the 203-residue chain is Akirin-2 (203 aa).

A phosphoserine mark is found at Ser-18 and Ser-21. The Nuclear localization signal motif lies at 22–27 (PKRRRC). At Ser-57 the chain carries Phosphoserine. Residues 200–203 (SYVS) carry the SYVS motif motif.

This sequence belongs to the akirin family. As to quaternary structure, homodimer. Interacts with IPO9; the interaction is direct. Associates (via SYVS motif) with 20S and 26S proteasomes. Interacts with SMARCD1; promoting SWI/SNF complex recruitment. Interacts with NFKBIZ. Interacts with YWHAB. Polyubiquitinated. Polyubiquitination is dependent of UBR5 that extends pre-ubiquitinated AKIRIN2. As to expression, widely expressed with the highest expression in peripheral blood leukocytes.

It localises to the nucleus. Its subcellular location is the cytoplasm. It is found in the membrane. In terms of biological role, molecular adapter that acts as a bridge between a variety of multiprotein complexes, and which is involved in embryonic development, immunity, myogenesis and brain development. Plays a key role in nuclear protein degradation by promoting import of proteasomes into the nucleus: directly binds to fully assembled 20S proteasomes at one end and to nuclear import receptor IPO9 at the other end, bridging them together and mediating the import of pre-assembled proteasome complexes through the nuclear pore. Involved in innate immunity by regulating the production of interleukin-6 (IL6) downstream of Toll-like receptor (TLR): acts by bridging the NF-kappa-B inhibitor NFKBIZ and the SWI/SNF complex, leading to promote induction of IL6. Also involved in adaptive immunity by promoting B-cell activation. Involved in brain development: required for the survival and proliferation of cerebral cortical progenitor cells. Involved in myogenesis: required for skeletal muscle formation and skeletal development, possibly by regulating expression of muscle differentiation factors. Also plays a role in facilitating interdigital tissue regression during limb development. The protein is Akirin-2 of Homo sapiens (Human).